We begin with the raw amino-acid sequence, 117 residues long: Large ribosomal subunit protein bL19 (117 aa).

This sequence belongs to the bacterial ribosomal protein bL19 family.

This protein is located at the 30S-50S ribosomal subunit interface and may play a role in the structure and function of the aminoacyl-tRNA binding site. The polypeptide is Large ribosomal subunit protein bL19 (Cutibacterium acnes (strain DSM 16379 / KPA171202) (Propionibacterium acnes)).